Here is a 368-residue protein sequence, read N- to C-terminus: uncharacterized protein (368 aa).

This sequence belongs to the ornithine cyclodeaminase/mu-crystallin family.

This is an uncharacterized protein from Dictyostelium discoideum (Social amoeba).